The following is a 335-amino-acid chain: Carboxylesterase 1 (335 aa).

The Involved in the stabilization of the negatively charged intermediate by the formation of the oxyanion hole motif lies at 90–92 (HGG). Paraoxon-binding positions include 92–93 (GG), Ser-169, and Ala-170. Ser-169 is an active-site residue. Active-site residues include Asp-276 and His-306.

The protein belongs to the 'GDXG' lipolytic enzyme family.

It carries out the reaction a carboxylic ester + H2O = an alcohol + a carboxylate + H(+). With respect to regulation, is inhibited by the organophosphates paraoxon and dimethylchlorophosphate (DMCP). In terms of biological role, carboxylesterase acting on esters with varying acyl chain length. This is Carboxylesterase 1 (CXE1) from Actinidia eriantha (Velvet vine).